We begin with the raw amino-acid sequence, 281 residues long: D-arabinitol 2-dehydrogenase [ribulose-forming] (281 aa).

NADP(+) contacts are provided by L31 and N52. The Proton donor role is filled by S169. NADP(+)-binding residues include Y184, K188, I217, and T219. Catalysis depends on Y184, which acts as the Proton acceptor. K188 (lowers pKa of active site Tyr) is an active-site residue.

Belongs to the short-chain dehydrogenases/reductases (SDR) family.

The enzyme catalyses D-arabinitol + NAD(+) = D-ribulose + NADH + H(+). It participates in carbohydrate metabolism; D-arabinitol metabolism. The sequence is that of D-arabinitol 2-dehydrogenase [ribulose-forming] (ARD1) from Candida albicans (strain WO-1) (Yeast).